A 407-amino-acid chain; its full sequence is MKILVYGINYSPELTGIGKYTGEMVEWLAAQGHEVRVITAPPYYPQWQVGENYSAWRYKREEGAATVWRCPLYVPKQPSTLKRLLHLGSFAVSSFFPLMAQRRWKPDRIIGVVPTLFCAPGMRLLAKLSGARTVLHIQDYEVDAMLGLGLAGKGKGGKVAQLATAFERSGLHNVDNVSTISRSMMNKAIEKGVAAENVIFFPNWSEIARFQHVADADVDALRNQLDLPDNKKIILYSGNIGEKQGLENVIEAADRLRDEPLIFAIVGQGGGKARLEKMAQQRGLRNMQFFPLQSYDALPALLKMGDCHLVVQKRGAADAVLPSKLTNILAVGGNAVITAEAYTELGQLCETFPGIAVCVEPESVEALVAGIRQALLLPKHNTVAREYAERTLDKENVLRQFINDIRG.

It participates in slime biogenesis; slime polysaccharide biosynthesis. In Escherichia coli (strain K12), this protein is Putative colanic acid biosynthesis glycosyl transferase WcaI (wcaI).